A 271-amino-acid polypeptide reads, in one-letter code: Glutamate racemase (271 aa).

Residues 10–11 (DS) and 42–43 (YG) each bind substrate. Cys-73 serves as the catalytic Proton donor/acceptor. 74-75 (NT) contacts substrate. The Proton donor/acceptor role is filled by Cys-183. 184 to 185 (TH) provides a ligand contact to substrate.

This sequence belongs to the aspartate/glutamate racemases family.

The enzyme catalyses L-glutamate = D-glutamate. Its pathway is cell wall biogenesis; peptidoglycan biosynthesis. Provides the (R)-glutamate required for cell wall biosynthesis. The polypeptide is Glutamate racemase (Lactococcus lactis subsp. cremoris (strain MG1363)).